Consider the following 452-residue polypeptide: Bifunctional protein GlmU (452 aa).

A pyrophosphorylase region spans residues 1–231 (MSRTCLAVIL…EAELAGCNNR (231 aa)). Residues 10–13 (LAAG), K24, Q77, 82–83 (GT), 105–107 (YGD), G143, E157, N172, and N229 each bind UDP-N-acetyl-alpha-D-glucosamine. D107 provides a ligand contact to Mg(2+). N229 provides a ligand contact to Mg(2+). The interval 232 to 252 (AELAVIEKLWQERRRHELMLS) is linker. The tract at residues 253–452 (GVSMIAPETV…MAIKAFSGKV (200 aa)) is N-acetyltransferase. R318 and K336 together coordinate UDP-N-acetyl-alpha-D-glucosamine. H348 acts as the Proton acceptor in catalysis. UDP-N-acetyl-alpha-D-glucosamine is bound by residues Y351 and N362. Acetyl-CoA is bound by residues A365, 371-372 (NY), S390, S408, and R425.

In the N-terminal section; belongs to the N-acetylglucosamine-1-phosphate uridyltransferase family. This sequence in the C-terminal section; belongs to the transferase hexapeptide repeat family. As to quaternary structure, homotrimer. Mg(2+) is required as a cofactor.

The protein resides in the cytoplasm. It carries out the reaction alpha-D-glucosamine 1-phosphate + acetyl-CoA = N-acetyl-alpha-D-glucosamine 1-phosphate + CoA + H(+). The catalysed reaction is N-acetyl-alpha-D-glucosamine 1-phosphate + UTP + H(+) = UDP-N-acetyl-alpha-D-glucosamine + diphosphate. Its pathway is nucleotide-sugar biosynthesis; UDP-N-acetyl-alpha-D-glucosamine biosynthesis; N-acetyl-alpha-D-glucosamine 1-phosphate from alpha-D-glucosamine 6-phosphate (route II): step 2/2. It functions in the pathway nucleotide-sugar biosynthesis; UDP-N-acetyl-alpha-D-glucosamine biosynthesis; UDP-N-acetyl-alpha-D-glucosamine from N-acetyl-alpha-D-glucosamine 1-phosphate: step 1/1. The protein operates within bacterial outer membrane biogenesis; LPS lipid A biosynthesis. Functionally, catalyzes the last two sequential reactions in the de novo biosynthetic pathway for UDP-N-acetylglucosamine (UDP-GlcNAc). The C-terminal domain catalyzes the transfer of acetyl group from acetyl coenzyme A to glucosamine-1-phosphate (GlcN-1-P) to produce N-acetylglucosamine-1-phosphate (GlcNAc-1-P), which is converted into UDP-GlcNAc by the transfer of uridine 5-monophosphate (from uridine 5-triphosphate), a reaction catalyzed by the N-terminal domain. The protein is Bifunctional protein GlmU of Allorhizobium ampelinum (strain ATCC BAA-846 / DSM 112012 / S4) (Agrobacterium vitis (strain S4)).